Reading from the N-terminus, the 247-residue chain is Protein ATC1/LIC4 (247 aa).

2 disordered regions span residues 95–146 and 226–247; these read NSSA…DDQA and EKST…CPSS. Polar residues predominate over residues 129–146; that stretch reads QNPSHRISNVQSNSDDQA.

It is found in the cytoplasm. It localises to the nucleus. Functionally, involved in cation homeostasis and in the regulation of the cation stress signaling cascades. The protein is Protein ATC1/LIC4 (ATC1) of Debaryomyces hansenii (strain ATCC 36239 / CBS 767 / BCRC 21394 / JCM 1990 / NBRC 0083 / IGC 2968) (Yeast).